The primary structure comprises 119 residues: Large ribosomal subunit protein bL19 (119 aa).

This sequence belongs to the bacterial ribosomal protein bL19 family.

This protein is located at the 30S-50S ribosomal subunit interface and may play a role in the structure and function of the aminoacyl-tRNA binding site. This is Large ribosomal subunit protein bL19 from Saccharopolyspora erythraea (strain ATCC 11635 / DSM 40517 / JCM 4748 / NBRC 13426 / NCIMB 8594 / NRRL 2338).